Here is a 326-residue protein sequence, read N- to C-terminus: Ribose operon repressor (326 aa).

The HTH lacI-type domain maps to 1–56 (MATIKDVAGAAGVSVATVSRNLNDNGYVHEETRTRVIAAMAKLNYYPNEVARSLYK). Positions 4 to 23 (IKDVAGAAGVSVATVSRNLN) form a DNA-binding region, H-T-H motif.

Functionally, transcriptional repressor for the ribose rbsDACBK operon. The sequence is that of Ribose operon repressor (rbsR) from Bacillus subtilis (strain 168).